Reading from the N-terminus, the 183-residue chain is GTP cyclohydrolase 1 (183 aa).

Residues cysteine 71, histidine 74, and cysteine 142 each coordinate Zn(2+).

The protein belongs to the GTP cyclohydrolase I family. In terms of assembly, toroid-shaped homodecamer, composed of two pentamers of five dimers.

It catalyses the reaction GTP + H2O = 7,8-dihydroneopterin 3'-triphosphate + formate + H(+). The protein operates within cofactor biosynthesis; 7,8-dihydroneopterin triphosphate biosynthesis; 7,8-dihydroneopterin triphosphate from GTP: step 1/1. The polypeptide is GTP cyclohydrolase 1 (Leptospira borgpetersenii serovar Hardjo-bovis (strain JB197)).